A 556-amino-acid chain; its full sequence is Copine-7 (556 aa).

C2 domains follow at residues 1 to 128 and 135 to 262; these read MSGD…TRPL and NAGK…AQWD. Asp168, Asp174, Asp230, Asp232, and Asp238 together coordinate Ca(2+). Residues 305-504 form the VWFA domain; the sequence is HCTVAIDFTA…PALRDIVQFV (200 aa). A disordered region spans residues 536 to 556; it reads KDLPPRSLGGQTGEAGPSSAP.

This sequence belongs to the copine family. Ca(2+) is required as a cofactor.

It localises to the cytoplasm. It is found in the nucleus. The protein resides in the cell membrane. Functionally, calcium-dependent phospholipid-binding protein that may play a role in calcium-mediated intracellular processes. The chain is Copine-7 from Rattus norvegicus (Rat).